The sequence spans 169 residues: ATP synthase subunit b (169 aa).

Residues 11 to 31 (IPSFIAQIVNFGLLLGLLYLF) form a helical membrane-spanning segment.

The protein belongs to the ATPase B chain family. As to quaternary structure, F-type ATPases have 2 components, F(1) - the catalytic core - and F(0) - the membrane proton channel. F(1) has five subunits: alpha(3), beta(3), gamma(1), delta(1), epsilon(1). F(0) has three main subunits: a(1), b(2) and c(10-14). The alpha and beta chains form an alternating ring which encloses part of the gamma chain. F(1) is attached to F(0) by a central stalk formed by the gamma and epsilon chains, while a peripheral stalk is formed by the delta and b chains.

It localises to the cell membrane. Functionally, f(1)F(0) ATP synthase produces ATP from ADP in the presence of a proton or sodium gradient. F-type ATPases consist of two structural domains, F(1) containing the extramembraneous catalytic core and F(0) containing the membrane proton channel, linked together by a central stalk and a peripheral stalk. During catalysis, ATP synthesis in the catalytic domain of F(1) is coupled via a rotary mechanism of the central stalk subunits to proton translocation. In terms of biological role, component of the F(0) channel, it forms part of the peripheral stalk, linking F(1) to F(0). In Dehalococcoides mccartyi (strain ATCC BAA-2100 / JCM 16839 / KCTC 5957 / BAV1), this protein is ATP synthase subunit b.